The chain runs to 380 residues: Chaperone protein DnaJ (380 aa).

Positions 5–69 (DYYEILGVSK…QKRAHYDQFG (65 aa)) constitute a J domain. The CR-type zinc-finger motif lies at 135–217 (GKETDIEIPR…CGGTGRVKRR (83 aa)). Positions 148, 151, 165, 168, 191, 194, 205, and 208 each coordinate Zn(2+). 4 CXXCXGXG motif repeats span residues 148 to 155 (CNTCHGTG), 165 to 172 (CSYCHGTG), 191 to 198 (CPYCGGTG), and 205 to 212 (CTTCGGTG).

The protein belongs to the DnaJ family. As to quaternary structure, homodimer. Zn(2+) is required as a cofactor.

The protein resides in the cytoplasm. In terms of biological role, participates actively in the response to hyperosmotic and heat shock by preventing the aggregation of stress-denatured proteins and by disaggregating proteins, also in an autonomous, DnaK-independent fashion. Unfolded proteins bind initially to DnaJ; upon interaction with the DnaJ-bound protein, DnaK hydrolyzes its bound ATP, resulting in the formation of a stable complex. GrpE releases ADP from DnaK; ATP binding to DnaK triggers the release of the substrate protein, thus completing the reaction cycle. Several rounds of ATP-dependent interactions between DnaJ, DnaK and GrpE are required for fully efficient folding. Also involved, together with DnaK and GrpE, in the DNA replication of plasmids through activation of initiation proteins. The polypeptide is Chaperone protein DnaJ (Parageobacillus thermoglucosidasius (Geobacillus thermoglucosidasius)).